The sequence spans 218 residues: Octanoyltransferase (218 aa).

The 176-residue stretch at 31 to 206 folds into the BPL/LPL catalytic domain; the sequence is REAADEVWLV…QLVKHLDYAE (176 aa). Substrate contacts are provided by residues 70–77, 137–139, and 150–152; these read RGGQVTYH, SLG, and GLA. The active-site Acyl-thioester intermediate is the cysteine 168.

The protein belongs to the LipB family.

It localises to the cytoplasm. It carries out the reaction octanoyl-[ACP] + L-lysyl-[protein] = N(6)-octanoyl-L-lysyl-[protein] + holo-[ACP] + H(+). Its pathway is protein modification; protein lipoylation via endogenous pathway; protein N(6)-(lipoyl)lysine from octanoyl-[acyl-carrier-protein]: step 1/2. In terms of biological role, catalyzes the transfer of endogenously produced octanoic acid from octanoyl-acyl-carrier-protein onto the lipoyl domains of lipoate-dependent enzymes. Lipoyl-ACP can also act as a substrate although octanoyl-ACP is likely to be the physiological substrate. The chain is Octanoyltransferase from Pseudomonas syringae pv. syringae (strain B728a).